The following is a 156-amino-acid chain: Small ribosomal subunit protein uS7 (156 aa).

It belongs to the universal ribosomal protein uS7 family. As to quaternary structure, part of the 30S ribosomal subunit. Contacts proteins S9 and S11.

Its function is as follows. One of the primary rRNA binding proteins, it binds directly to 16S rRNA where it nucleates assembly of the head domain of the 30S subunit. Is located at the subunit interface close to the decoding center, probably blocks exit of the E-site tRNA. This chain is Small ribosomal subunit protein uS7, found in Staphylococcus aureus (strain bovine RF122 / ET3-1).